The following is a 478-amino-acid chain: Crt homolog 3 (478 aa).

The tract at residues 1–30 (MGSDERKPLLSINDGDDDFNHQDVSTKTPP) is disordered. Over 1-52 (MGSDERKPLLSINDGDDDFNHQDVSTKTPPIKKESLSNKFKSFLKKSMTKET) the chain is Cytoplasmic. A helical membrane pass occupies residues 53 to 73 (LPILIYVLLYIISGVINVVLL). Residues 74-83 (KKLMIKFVNY) lie on the Vacuolar side of the membrane. A helical transmembrane segment spans residues 84–104 (GFFLSQITNYGYLPIFLVAMW). The Cytoplasmic segment spans residues 105–124 (YKMYCTSDVPKETRNFPQYK). A helical membrane pass occupies residues 125–145 (FVIMGLLDAINGFFVVIGGVS). Residues 146–149 (TSGP) lie on the Vacuolar side of the membrane. A helical transmembrane segment spans residues 150 to 170 (LQQLLNQAIIPFTMIASFIFL). At 171–178 (RERYSLFQ) the chain is on the cytoplasmic side. The chain crosses the membrane as a helical span at residues 179–199 (LGGAAVILGGVIVSLIPSLVG). Topologically, residues 200-205 (GSSGGN) are vacuolar. The chain crosses the membrane as a helical span at residues 206–226 (ILFYNFFYLISVIPGALSNVY). The Cytoplasmic portion of the chain corresponds to 227–237 (KDIAFQSIDMD). Residues 238 to 258 (VWYLQFWDCLYQSLFGSILFP) form a helical membrane-spanning segment. Over 259–322 (VNNWLPPPAT…FVCDDCHNTW (64 aa)) the chain is Vacuolar. N-linked (GlcNAc...) asparagine glycosylation is present at Asn-296. Residues 323–343 (IIVLIYMTVNIAYNIFILLVL) traverse the membrane as a helical segment. The Cytoplasmic portion of the chain corresponds to 344 to 352 (KHAGATVYS). Residues 353-373 (IANTVILPLTNIFFSIHFIMG) traverse the membrane as a helical segment. The Vacuolar segment spans residues 374-376 (AAT). A helical transmembrane segment spans residues 377 to 397 (TPFSALSVAGLLLILFGLGGY). Residues 398-478 (RIGSMIKKPP…RYRATNIINN (81 aa)) are Cytoplasmic-facing. The tract at residues 404–446 (KKPPPDSKKDSEQQGGEGGAGDGDSSDNKNNLGDSAEIPQQIQ) is disordered. Basic and acidic residues predominate over residues 406–415 (PPPDSKKDSE).

This sequence belongs to the CRT-like transporter family.

Its subcellular location is the vacuole membrane. In terms of biological role, nutrient transporter. Involved in maintaining the osmotic homeostasis of the digestive vacuole. The protein is Crt homolog 3 (crtp3) of Dictyostelium discoideum (Social amoeba).